We begin with the raw amino-acid sequence, 313 residues long: Glyoxylate/hydroxypyruvate reductase A HPR2 (313 aa).

NADP(+)-binding positions include 152-155 (LGRI), 174-176 (SRT), 230-232 (IGR), and Asp256. Arg232 is an active-site residue. Glu261 is a catalytic residue. The Proton donor role is filled by His279. An NADP(+)-binding site is contributed by 279–281 (HVG).

It belongs to the D-isomer specific 2-hydroxyacid dehydrogenase family. GyaR subfamily. Homodimer.

It is found in the cytoplasm. The enzyme catalyses glycolate + NADP(+) = glyoxylate + NADPH + H(+). It catalyses the reaction (R)-glycerate + NAD(+) = 3-hydroxypyruvate + NADH + H(+). It carries out the reaction (R)-glycerate + NADP(+) = 3-hydroxypyruvate + NADPH + H(+). With respect to regulation, strongly inhibited by oxalate. In terms of biological role, catalyzes the NADPH-dependent reduction of glyoxylate and hydroxypyruvate (HP) into glycolate and glycerate in the cytoplasm, thus providing a cytosolic bypass to the photorespiratory core cycle. Mostly active in the presence of NADPH and hydroxypyruvate. The polypeptide is Glyoxylate/hydroxypyruvate reductase A HPR2 (HPR2) (Arabidopsis thaliana (Mouse-ear cress)).